The chain runs to 487 residues: Probable glutamate receptor (487 aa).

The first 23 residues, 1–23 (MDKGLHFIFCVVTAVLLLRESSQ), serve as a signal peptide directing secretion. Over 24–169 (TGAMRNDDAM…FFHFLAPFSK (146 aa)) the chain is Extracellular. Asn-104 is a glycosylation site (N-linked (GlcNAc...) asparagine). Residues 170 to 190 (ETWTGLLFAYVLTCVCLFLVA) form a helical membrane-spanning segment. Residues 191–235 (RLSPCEWNEPKNEENHFTFLNSLWFGAGALTLQGVTPRPKAFSVR) are Cytoplasmic-facing. Residues 236–256 (VIAAIWWLFTIALLAAYIANF) form a helical membrane-spanning segment. Topologically, residues 257–419 (TALLSSGSEQ…EGWSPLQPQA (163 aa)) are extracellular. Residues 420-440 (LGGLFLTLAIGLALGVIAAMV) traverse the membrane as a helical segment. The Cytoplasmic portion of the chain corresponds to 441–487 (ELSNKSRHAAGHIKKSCCSIFTEEMCTRLRIKENTRQTQETSGRANA).

It belongs to the glutamate-gated ion channel (TC 1.A.10.1) family.

The protein localises to the cell membrane. Its subcellular location is the postsynaptic cell membrane. Receptor for glutamate. L-glutamate acts as an excitatory neurotransmitter at many synapses in the central nervous system. The postsynaptic actions of Glu are mediated by a variety of receptors that are named according to their selective agonists. In Gallus gallus (Chicken), this protein is Probable glutamate receptor (KBP).